We begin with the raw amino-acid sequence, 384 residues long: UPF0496 protein At3g28310/At3g28320 (384 aa).

A coiled-coil region spans residues 184–215 (QESLFDRVTETKERIAKEIEEVQKRISNVNTA). The next 2 helical transmembrane spans lie at 217–237 (IVSHVVFGAAAFGYAAGCIAL) and 242–262 (VGAPLGAGMVTLLPVIVVQWV). Positions 264 to 361 (VNYVLNNSLE…TTKITEVCET (98 aa)) form a coiled coil.

It belongs to the UPF0496 family.

The protein localises to the membrane. The polypeptide is UPF0496 protein At3g28310/At3g28320 (Arabidopsis thaliana (Mouse-ear cress)).